A 283-amino-acid chain; its full sequence is Protease HtpX (283 aa).

Transmembrane regions (helical) follow at residues 4–24 and 33–53; these read IALF…ILSV and GGIL…SLFM. H139 provides a ligand contact to Zn(2+). The active site involves E140. Position 143 (H143) interacts with Zn(2+). A run of 2 helical transmembrane segments spans residues 147–167 and 192–212; these read GDMV…IFLS and FLVS…IAMW. E218 lines the Zn(2+) pocket.

This sequence belongs to the peptidase M48B family. Zn(2+) serves as cofactor.

The protein localises to the cell inner membrane. The polypeptide is Protease HtpX (Glaesserella parasuis serovar 5 (strain SH0165) (Haemophilus parasuis)).